The following is a 384-amino-acid chain: Geranylgeranyl pyrophosphate synthase (384 aa).

2 disordered regions span residues 1–25 and 39–78; these read MVPNANSNTVSLQSPNAIPPRTSST and RPVPESDWLGQNNTRNRSSSTTAIPLTGMHATGPQDPARY. Residues 47–62 show a composition bias toward polar residues; sequence LGQNNTRNRSSSTTAI. Lys112, Arg115, and His144 together coordinate isopentenyl diphosphate. Residues Asp151 and Asp155 each contribute to the Mg(2+) site. Residue Arg160 participates in dimethylallyl diphosphate binding. Arg161 provides a ligand contact to isopentenyl diphosphate. Dimethylallyl diphosphate contacts are provided by Lys238, Thr239, and Gln272. Asp275 is a binding site for Mg(2+). Dimethylallyl diphosphate is bound by residues Asn279, Lys289, and Lys299.

Belongs to the FPP/GGPP synthase family. Mg(2+) serves as cofactor.

The enzyme catalyses isopentenyl diphosphate + dimethylallyl diphosphate = (2E)-geranyl diphosphate + diphosphate. The catalysed reaction is isopentenyl diphosphate + (2E)-geranyl diphosphate = (2E,6E)-farnesyl diphosphate + diphosphate. It catalyses the reaction isopentenyl diphosphate + (2E,6E)-farnesyl diphosphate = (2E,6E,10E)-geranylgeranyl diphosphate + diphosphate. The protein operates within secondary metabolite biosynthesis. Its function is as follows. Catalyzes the trans-addition of the 3 molecules of isopentenyl diphosphate (IPP) onto dimethylallyl diphosphate (DMAPP) to form geranylgeranyl pyrophosphate (GGPP). GGPP is a precursor for the biosynthesis of many secondary metabolites, including the indole diterpenes nodulisporic acids (NA). The protein is Geranylgeranyl pyrophosphate synthase of Hypoxylon pulicicidum.